A 99-amino-acid chain; its full sequence is Plastocyanin (99 aa).

The 99-residue stretch at 1–99 (IEVLLGGDDG…AGMVGKVTVN (99 aa)) folds into the Plastocyanin-like domain. Positions 37, 84, 87, and 92 each coordinate Cu cation.

It belongs to the plastocyanin family. It depends on Cu(2+) as a cofactor.

The protein resides in the plastid. It localises to the chloroplast thylakoid membrane. Functionally, participates in electron transfer between P700 and the cytochrome b6-f complex in photosystem I. This is Plastocyanin (PETE) from Cucurbita pepo (Vegetable marrow).